The chain runs to 467 residues: Asparagine--tRNA ligase (467 aa).

It belongs to the class-II aminoacyl-tRNA synthetase family. In terms of assembly, homodimer.

It is found in the cytoplasm. It catalyses the reaction tRNA(Asn) + L-asparagine + ATP = L-asparaginyl-tRNA(Asn) + AMP + diphosphate + H(+). The sequence is that of Asparagine--tRNA ligase from Actinobacillus succinogenes (strain ATCC 55618 / DSM 22257 / CCUG 43843 / 130Z).